A 191-amino-acid chain; its full sequence is UPF0302 protein SA1295 (191 aa).

The protein belongs to the UPF0302 family.

This is UPF0302 protein SA1295 from Staphylococcus aureus (strain N315).